A 230-amino-acid chain; its full sequence is MDTVTTNIVTTDIRLLRLLQLSSVGLPVGGFAFSQGMEYAIDQGWVKNKTEVSDWIGLQLQQSLARVDLPVLRLCMDAAKQQNTERLFELNDLVLACRETKELRLNDTAMGEALFRLMSSLQIDTPFKRLDEMSFVTLFAIAANHWGLQVDLACLGFAWSWLENQIAAATKLVPLGQTQAQELLGELQTDIRHAIAMSLNIEEERVGAGLPAIAIASALHETQYSRLFRS.

Belongs to the UreF family. In terms of assembly, ureD, UreF and UreG form a complex that acts as a GTP-hydrolysis-dependent molecular chaperone, activating the urease apoprotein by helping to assemble the nickel containing metallocenter of UreC. The UreE protein probably delivers the nickel.

The protein localises to the cytoplasm. Functionally, required for maturation of urease via the functional incorporation of the urease nickel metallocenter. This Marinomonas sp. (strain MWYL1) protein is Urease accessory protein UreF.